The chain runs to 531 residues: MELQSRPEALAVELARHQNGDLKKQLHERQPRIAALSDKQALGTITAVPVTGPQVSSLQRLAGQGAAVLPQVRPKTLIPDSLPVAPGRDRPPKQPPTFQKATVVSVKNPSPALPTANNTVSHVPAPGSQPQALAEPAALASPLSSAGVAYAIISTSPSNAAAMAPSTAVSVVSDSIKVQPLLISADNKPPPRLLSSPHPATHHCPLHPSSLPLTPPSPSLSPSPLHGIFQVIIIQPQVQTQPESTAESRPPTEEPSQGAQATKKKKEDRPPTQENPEKIAFMVALGLVTTEHLEEIQSKRQERKRRSTANPAYSGLLETERKRLASNYLNNPLFLTARANEDPCWKNEITHDEHCAACKRGANLQPCGTCPGAYHLSCLEPPLKTAPKGVWVCPRCQQKALKKDEGVPWTGMLAIVHSYVTHKTVKEEEKQKLLQRGSELQNEHQQLEERDRRLASAVQKCLELKTSLLARQRGTQSSLDRLRALLRLIQGEQLLQVTMTTTSPAPLLAGPWTKPSVAATHPTVQHPQGHN.

Disordered regions lie at residues 79 to 99 (PDSL…PTFQ), 184 to 222 (SADN…SLSP), 238 to 277 (VQTQ…ENPE), and 295 to 314 (EIQS…PAYS). The span at 265-277 (KKEDRPPTQENPE) shows a compositional bias: basic and acidic residues. The PHD-type zinc finger occupies 352–399 (DEHCAACKRGANLQPCGTCPGAYHLSCLEPPLKTAPKGVWVCPRCQQK). The stretch at 423–465 (KTVKEEEKQKLLQRGSELQNEHQQLEERDRRLASAVQKCLELK) forms a coiled coil. Positions 507 to 531 (LLAGPWTKPSVAATHPTVQHPQGHN) are disordered. Positions 522 to 531 (PTVQHPQGHN) are enriched in polar residues.

The protein is PHD finger protein 21B (PHF21B) of Homo sapiens (Human).